The following is a 72-amino-acid chain: Heat-stable enterotoxin ST-IA/ST-P (72 aa).

The signal sequence occupies residues 1-19; the sequence is MKKLMLAIFISVLSFPSFS. Positions 20 to 54 are excised as a propeptide; the sequence is QSTESLDSSKEKITLETKKCDVVKNNSEKKSENMN. Disulfide bonds link Cys59/Cys64, Cys60/Cys68, and Cys63/Cys71.

This sequence belongs to the heat-stable enterotoxin family.

The protein localises to the secreted. Its function is as follows. Toxin which activates the particulate form of guanylate cyclase and increases cyclic GMP levels within the host intestinal epithelial cells. This chain is Heat-stable enterotoxin ST-IA/ST-P (sta1), found in Escherichia coli.